Here is a 470-residue protein sequence, read N- to C-terminus: Argininosuccinate lyase (470 aa).

This sequence belongs to the lyase 1 family. Argininosuccinate lyase subfamily.

The protein localises to the cytoplasm. The enzyme catalyses 2-(N(omega)-L-arginino)succinate = fumarate + L-arginine. It participates in amino-acid biosynthesis; L-arginine biosynthesis; L-arginine from L-ornithine and carbamoyl phosphate: step 3/3. The protein is Argininosuccinate lyase of Leptospira interrogans serogroup Icterohaemorrhagiae serovar copenhageni (strain Fiocruz L1-130).